The chain runs to 495 residues: Fusicoccadiene 8-ol C-16 hydroxylase (495 aa).

Residues 12-32 form a helical membrane-spanning segment; sequence VLLALIVWIGTTIIYNIYFHP. N-linked (GlcNAc...) asparagine glycans are attached at residues Asn-249 and Asn-317. Residue Cys-439 coordinates heme.

The protein belongs to the cytochrome P450 family. Requires heme as cofactor.

It localises to the membrane. The protein operates within mycotoxin biosynthesis. Functionally, cytochrome P450 monooxygenase; part of the gene cluster that mediates the biosynthesis of the diterpene glucoside brassicicene C. In the first step of the brassicicene C biosynthesis, the bifunctional diterpene synthase bsc8 that possesses both prenyl transferase and terpene cyclase activity, converts isopentenyl diphosphate and dimethylallyl diphosphate into geranylgeranyl diphosphate (GGDP) that is further converted into fusicocca-2,10(14)-diene, the first precursor for brassicicene C. Fusicocca-2,10(14)-diene is then substrate of cytochrome P450 monooxygenase bsc1 for hydroxylation at the C-8 position. Oxidation at C-16 position to aldehyde is then catalyzed by the cytochrome P450 monooyxygenase bsc7, yielding fusicocca-2,10(14)-diene-8-beta,16-diol. Follows the isomerization of the double bond and reduction of aldehyde to alcohol catalyzed by the short-chain dehydrogenase/reductase bsc3 to yield the diol compound fusicocca-1,10(14)-diene-8 beta,16-diol. The next step is the oxidation at the C-3 position of fusicocca-2,10(14)-diene-8-beta,16-diol catalyzed by the alpha-ketoglutarate dependent dioxygenase bsc9, to produce a triol compound. Methylation of the hydroxy group at position 16 is performed by the methyltransferase bsc6. 16-O-methylation is followed by oxidation at the C-13 position to ketone and an alkyl shift of the methyl group leads to brassicicene C. Although the probable acetyltransferase bsc4 is included in the gene cluster, no acetylation reactions are necessary for brassicicene C biosynthesis. However, the fact that brassicicene E, which is a structurally related compound having an acetoxy group at position 12, was previously isolated from another strain of A.brassicicola suggests that the ATCC 96836 strain might also produce a small amount of brassicicene E. In Alternaria brassicicola (Dark leaf spot agent), this protein is Fusicoccadiene 8-ol C-16 hydroxylase.